The chain runs to 476 residues: MKISLPAFEKANVLVVGDVMLDRYWSGPTGRISPEAPVPVVRVNQIEDRPGGAANVALNIATLGGQVSLAGIVGEDETAAALTQGIEALGVVPKWHTVAELPTITKLRVMSRNQQLIRLDFEEAYPAEQSLALLASAEKELDKVAVVVLSDYAKGAIDKPEAFIAKAKAKGVKVLVDPKGSDFSRYRGATLLTPNMSEFEQVVGKVADEADLVTKAKELLKEFDFEALLVTRSEKGMTLITADAPELHIPTVAHEVYDVTGAGDTVISALATSLAVGCELPVACALANTAAGIVVGKLGTSTVSRIELIAALNLSHGESGYGVVSEDQLAYALEQAKLKGERVVMTNGCFDILHAGHVSYLQQARALGDRLIVAVNDDDSVKRLKGDGRPVNKLDRRMAVLAGLASVDWVVPFSEDTPQRIISRLLPNKLVKGGDYNVEDIAGGKEVIAAGGSVEVLGFEDGVSTTAIIENIMAKQ.

The segment at 1–319 (MKISLPAFEK…AALNLSHGES (319 aa)) is ribokinase. Residue 195-198 (NMSE) participates in ATP binding. The active site involves D264. A cytidylyltransferase region spans residues 345 to 476 (MTNGCFDILH…AIIENIMAKQ (132 aa)).

It in the N-terminal section; belongs to the carbohydrate kinase PfkB family. This sequence in the C-terminal section; belongs to the cytidylyltransferase family. Homodimer.

It catalyses the reaction D-glycero-beta-D-manno-heptose 7-phosphate + ATP = D-glycero-beta-D-manno-heptose 1,7-bisphosphate + ADP + H(+). It carries out the reaction D-glycero-beta-D-manno-heptose 1-phosphate + ATP + H(+) = ADP-D-glycero-beta-D-manno-heptose + diphosphate. It participates in nucleotide-sugar biosynthesis; ADP-L-glycero-beta-D-manno-heptose biosynthesis; ADP-L-glycero-beta-D-manno-heptose from D-glycero-beta-D-manno-heptose 7-phosphate: step 1/4. The protein operates within nucleotide-sugar biosynthesis; ADP-L-glycero-beta-D-manno-heptose biosynthesis; ADP-L-glycero-beta-D-manno-heptose from D-glycero-beta-D-manno-heptose 7-phosphate: step 3/4. Its function is as follows. Catalyzes the phosphorylation of D-glycero-D-manno-heptose 7-phosphate at the C-1 position to selectively form D-glycero-beta-D-manno-heptose-1,7-bisphosphate. In terms of biological role, catalyzes the ADP transfer from ATP to D-glycero-beta-D-manno-heptose 1-phosphate, yielding ADP-D-glycero-beta-D-manno-heptose. In Shewanella loihica (strain ATCC BAA-1088 / PV-4), this protein is Bifunctional protein HldE.